Consider the following 205-residue polypeptide: Small ribosomal subunit protein uS4 (205 aa).

A disordered region spans residues isoleucine 19–leucine 45. Positions serine 94–valine 157 constitute an S4 RNA-binding domain.

The protein belongs to the universal ribosomal protein uS4 family. Part of the 30S ribosomal subunit. Contacts protein S5. The interaction surface between S4 and S5 is involved in control of translational fidelity.

Its function is as follows. One of the primary rRNA binding proteins, it binds directly to 16S rRNA where it nucleates assembly of the body of the 30S subunit. Functionally, with S5 and S12 plays an important role in translational accuracy. This Brucella anthropi (strain ATCC 49188 / DSM 6882 / CCUG 24695 / JCM 21032 / LMG 3331 / NBRC 15819 / NCTC 12168 / Alc 37) (Ochrobactrum anthropi) protein is Small ribosomal subunit protein uS4.